The sequence spans 453 residues: Ribosomal protein uS12 methylthiotransferase RimO (453 aa).

One can recognise an MTTase N-terminal domain in the interval 5-120 (PKVGFVSLGC…VMQAVHSHLP (116 aa)). 6 residues coordinate [4Fe-4S] cluster: C14, C50, C79, C151, C155, and C158. Residues 137-382 (LTPRHYAYLK…MEVAEEVSAQ (246 aa)) enclose the Radical SAM core domain. The TRAM domain maps to 385-453 (QRKVGKTLKV…ADGHDLWGEV (69 aa)).

The protein belongs to the methylthiotransferase family. RimO subfamily. [4Fe-4S] cluster serves as cofactor.

The protein resides in the cytoplasm. It catalyses the reaction L-aspartate(89)-[ribosomal protein uS12]-hydrogen + (sulfur carrier)-SH + AH2 + 2 S-adenosyl-L-methionine = 3-methylsulfanyl-L-aspartate(89)-[ribosomal protein uS12]-hydrogen + (sulfur carrier)-H + 5'-deoxyadenosine + L-methionine + A + S-adenosyl-L-homocysteine + 2 H(+). Catalyzes the methylthiolation of an aspartic acid residue of ribosomal protein uS12. This Burkholderia ambifaria (strain ATCC BAA-244 / DSM 16087 / CCUG 44356 / LMG 19182 / AMMD) (Burkholderia cepacia (strain AMMD)) protein is Ribosomal protein uS12 methylthiotransferase RimO.